The chain runs to 1460 residues: Probable outer membrane protein PmpC (1460 aa).

An N-terminal signal peptide occupies residues 1–20 (MKFLSATAVFAAALPSITSA). Disordered regions lie at residues 21–48 (SSVE…FTEI), 92–212 (SEEN…PDKD), 279–372 (TPPA…ESGS), 455–549 (TPEE…DSSI), and 993–1021 (VDTS…TAQA). Residues 34-44 (SSRTGSSSSQS) are compositionally biased toward low complexity. Residues 97–114 (QASFQDSAQNQTENASEG) show a composition bias toward polar residues. The span at 115–137 (NSPNSENTNQSSTTETESITTDE) shows a compositional bias: low complexity. The span at 138 to 155 (QVQNDNESAASVPTTVET) shows a compositional bias: polar residues. Positions 290–327 (NDPSGSNGNDGSDDSNSSGNTDSNESNPNNSASNNTGS) are enriched in low complexity. A compositionally biased stretch (polar residues) spans 328–358 (ENELSSSTPSAQLPNPATPFLSSVSTNSQPI). Low complexity predominate over residues 461–471 (LKSSQLNNQNP). Positions 487–501 (SLETSPITNQDSASS) are enriched in polar residues. Composition is skewed to low complexity over residues 504-548 (AIFR…SDSS) and 995-1018 (TSTN…STPT). The Autotransporter domain maps to 1167-1460 (DEVAYNNLWI…MINCGARMTF (294 aa)).

The protein belongs to the PMP outer membrane protein family.

The protein resides in the secreted. It is found in the cell wall. It localises to the cell outer membrane. The sequence is that of Probable outer membrane protein PmpC (pmpC) from Chlamydia muridarum (strain MoPn / Nigg).